A 259-amino-acid chain; its full sequence is Glutamate racemase (259 aa).

Substrate-binding positions include Asp9–Ser10 and Tyr41–Gly42. The Proton donor/acceptor role is filled by Cys73. A substrate-binding site is contributed by Asn74 to Thr75. Residue Cys183 is the Proton donor/acceptor of the active site. Substrate is bound at residue Thr184–His185.

The protein belongs to the aspartate/glutamate racemases family.

The enzyme catalyses L-glutamate = D-glutamate. The protein operates within cell wall biogenesis; peptidoglycan biosynthesis. In terms of biological role, provides the (R)-glutamate required for cell wall biosynthesis. This chain is Glutamate racemase, found in Shewanella frigidimarina (strain NCIMB 400).